We begin with the raw amino-acid sequence, 465 residues long: Ribulose bisphosphate carboxylase large chain (465 aa).

Residue Lys-4 is modified to N6,N6,N6-trimethyllysine. Asn-113 and Thr-163 together coordinate substrate. Catalysis depends on Lys-165, which acts as the Proton acceptor. Residue Lys-167 coordinates substrate. Mg(2+) contacts are provided by Lys-191, Asp-193, and Glu-194. An N6-carboxylysine modification is found at Lys-191. His-284 serves as the catalytic Proton acceptor. Positions 285, 317, and 369 each coordinate substrate.

This sequence belongs to the RuBisCO large chain family. Type I subfamily. In terms of assembly, heterohexadecamer of 8 large chains and 8 small chains; disulfide-linked. The disulfide link is formed within the large subunit homodimers. It depends on Mg(2+) as a cofactor. The disulfide bond which can form in the large chain dimeric partners within the hexadecamer appears to be associated with oxidative stress and protein turnover.

It is found in the plastid. The protein localises to the chloroplast. It catalyses the reaction 2 (2R)-3-phosphoglycerate + 2 H(+) = D-ribulose 1,5-bisphosphate + CO2 + H2O. The enzyme catalyses D-ribulose 1,5-bisphosphate + O2 = 2-phosphoglycolate + (2R)-3-phosphoglycerate + 2 H(+). RuBisCO catalyzes two reactions: the carboxylation of D-ribulose 1,5-bisphosphate, the primary event in carbon dioxide fixation, as well as the oxidative fragmentation of the pentose substrate in the photorespiration process. Both reactions occur simultaneously and in competition at the same active site. The polypeptide is Ribulose bisphosphate carboxylase large chain (Fragaria ananassa (Strawberry)).